The following is an 884-amino-acid chain: Cytosolic carboxypeptidase-like protein 5 (884 aa).

A Peptidase M14 domain is found at Tyr-157–Ala-570. His-252 and Glu-255 together coordinate Zn(2+). 2 disordered regions span residues His-343 to Asp-364 and His-376 to Gly-401. Position 434 (His-434) interacts with Zn(2+). Glu-516 acts as the Proton donor/acceptor in catalysis. Disordered regions lie at residues Leu-603–Gly-737 and Gln-784–Tyr-859. Positions Pro-620–Pro-635 are enriched in polar residues. Low complexity-rich tracts occupy residues Ser-641–Ser-666 and Pro-714–Gly-737. Ser-839 carries the phosphoserine modification. Residues Ile-846–Ile-857 are compositionally biased toward polar residues.

This sequence belongs to the peptidase M14 family. Zn(2+) serves as cofactor.

It localises to the cytoplasm. Its subcellular location is the cytosol. The protein localises to the nucleus. The protein resides in the cytoskeleton. It is found in the spindle. It localises to the midbody. The enzyme catalyses gamma-L-glutamyl-L-glutamyl-[protein] + H2O = L-glutamyl-[protein] + L-glutamate. It catalyses the reaction (L-glutamyl)(n+1)-gamma-L-glutamyl-L-glutamyl-[protein] + H2O = (L-glutamyl)(n)-gamma-L-glutamyl-L-glutamyl-[protein] + L-glutamate. It carries out the reaction C-terminal L-alpha-aminoacyl-L-glutamyl-[tubulin] + H2O = C-terminal L-alpha-aminoacyl-[tubulin] + L-glutamate. The catalysed reaction is C-terminal L-alpha-aminoacyl-L-glutamyl-L-glutamyl-[tubulin] + H2O = C-terminal L-alpha-aminoacyl-L-glutamyl-[tubulin] + L-glutamate. Metallocarboxypeptidase that mediates deglutamylation of tubulin and non-tubulin target proteins. Catalyzes the removal of polyglutamate side chains present on the gamma-carboxyl group of glutamate residues within the C-terminal tail of alpha- and beta-tubulin. Cleaves alpha- and gamma-linked polyglutamate tubulin side-chain, as well as the branching point glutamate. Also catalyzes the removal of alpha-linked glutamate residues from the carboxy-terminus of alpha-tubulin. Mediates deglutamylation of nucleotidyltransferase CGAS, leading to CGAS antiviral defense response activation. The sequence is that of Cytosolic carboxypeptidase-like protein 5 (AGBL5) from Ailuropoda melanoleuca (Giant panda).